The following is a 270-amino-acid chain: Cyclic pyranopterin monophosphate synthase, mitochondrial (270 aa).

The N-terminal 32 residues, 1-32 (MISTLRRAVFLRRFPAVVSPIKRAFSSRIDDE), are a transit peptide targeting the mitochondrion. Substrate is bound by residues 187–189 (LCH) and 225–226 (ME). Residue aspartate 240 is part of the active site.

It belongs to the MoaC family. In terms of assembly, homohexamer. As to expression, abundantly expressed in the roots.

The protein localises to the mitochondrion matrix. The enzyme catalyses (8S)-3',8-cyclo-7,8-dihydroguanosine 5'-triphosphate = cyclic pyranopterin phosphate + diphosphate. It functions in the pathway cofactor biosynthesis; molybdopterin biosynthesis. Catalyzes the conversion of (8S)-3',8-cyclo-7,8-dihydroguanosine 5'-triphosphate to cyclic pyranopterin monophosphate (cPMP). The polypeptide is Cyclic pyranopterin monophosphate synthase, mitochondrial (CNX3) (Arabidopsis thaliana (Mouse-ear cress)).